A 266-amino-acid polypeptide reads, in one-letter code: Phosphatidate cytidylyltransferase (266 aa).

8 helical membrane-spanning segments follow: residues 16–36, 52–72, 78–98, 101–121, 125–145, 164–184, 186–206, and 237–257; these read VVLI…LFWA, LFQV…WVAA, PVEC…YQKA, SEAI…FGVY, GAVA…GAFF, LEGA…VGMG, LSGG…MAVF, and LDSM…LEIW.

The protein belongs to the CDS family.

It localises to the cell inner membrane. The enzyme catalyses a 1,2-diacyl-sn-glycero-3-phosphate + CTP + H(+) = a CDP-1,2-diacyl-sn-glycerol + diphosphate. The protein operates within phospholipid metabolism; CDP-diacylglycerol biosynthesis; CDP-diacylglycerol from sn-glycerol 3-phosphate: step 3/3. The protein is Phosphatidate cytidylyltransferase (cdsA) of Helicobacter pylori (strain J99 / ATCC 700824) (Campylobacter pylori J99).